The following is a 399-amino-acid chain: Phosphoglycerate kinase (399 aa).

Substrate-binding positions include 22-24 (DFN), Arg38, 61-64 (HLGR), Arg119, and Arg152. ATP is bound by residues Lys205, Gly296, Glu327, and 353–356 (GGDT).

The protein belongs to the phosphoglycerate kinase family. As to quaternary structure, monomer.

It is found in the cytoplasm. The catalysed reaction is (2R)-3-phosphoglycerate + ATP = (2R)-3-phospho-glyceroyl phosphate + ADP. It functions in the pathway carbohydrate degradation; glycolysis; pyruvate from D-glyceraldehyde 3-phosphate: step 2/5. This Nitratiruptor sp. (strain SB155-2) protein is Phosphoglycerate kinase.